The chain runs to 312 residues: MKVAVLGAAGGIGQALALLLKTQLPSGSELSLYDIAPVTPGVAVDLSHIPTAVKIKGFSGEDATPALEGADVVLISAGVARKPGMDRSDLFNVNAGIVKNLVQQVAKTCPKACIGIITNPVNTTVAIAAEVLKKAGVYDKNKLFGVTTLDIIRSNTFVAELKGKQPGEVEVPVIGGHSGVTILPLLSQVLGVSFTEQEVADLTKRIQNAGTEVVEAKAGGGSATLSMGQAAARFGLSLVRALQGEQGVVECAYVEGDGQYARFFSQPLLLGKSGVEERKSIGTLSAFEQNALEGMLDTLKKDIALGEEFVNK.

NAD(+) is bound by residues 7-13 (GAAGGIG) and aspartate 34. Substrate contacts are provided by arginine 81 and arginine 87. Residues asparagine 94 and 117 to 119 (ITN) each bind NAD(+). Substrate-binding residues include asparagine 119 and arginine 153. The active-site Proton acceptor is the histidine 177. Methionine 227 is an NAD(+) binding site.

It belongs to the LDH/MDH superfamily. MDH type 1 family. In terms of assembly, homodimer.

The enzyme catalyses (S)-malate + NAD(+) = oxaloacetate + NADH + H(+). Catalyzes the reversible oxidation of malate to oxaloacetate. This is Malate dehydrogenase from Shigella dysenteriae serotype 1 (strain Sd197).